The following is an 87-amino-acid chain: RNA-binding protein Hfq (87 aa).

The Sm domain maps to 9–68 (DPFLNALRRERIPVSIYLVNGIKLQGQIESFDQFVILLKNTVSQMVYKHAISTVVPARAV).

It belongs to the Hfq family. In terms of assembly, homohexamer.

RNA chaperone that binds small regulatory RNA (sRNAs) and mRNAs to facilitate mRNA translational regulation in response to envelope stress, environmental stress and changes in metabolite concentrations. Also binds with high specificity to tRNAs. This chain is RNA-binding protein Hfq, found in Aeromonas hydrophila subsp. hydrophila (strain ATCC 7966 / DSM 30187 / BCRC 13018 / CCUG 14551 / JCM 1027 / KCTC 2358 / NCIMB 9240 / NCTC 8049).